Here is a 373-residue protein sequence, read N- to C-terminus: 3-dehydroquinate synthase (373 aa).

NAD(+) contacts are provided by residues 67 to 72 (EGEETK), 101 to 105 (GVILD), 125 to 126 (TT), lysine 138, and lysine 147. Glutamate 180, histidine 240, and histidine 256 together coordinate Zn(2+).

The protein belongs to the sugar phosphate cyclases superfamily. Dehydroquinate synthase family. Requires NAD(+) as cofactor. Co(2+) is required as a cofactor. Zn(2+) serves as cofactor.

It is found in the cytoplasm. The catalysed reaction is 7-phospho-2-dehydro-3-deoxy-D-arabino-heptonate = 3-dehydroquinate + phosphate. It functions in the pathway metabolic intermediate biosynthesis; chorismate biosynthesis; chorismate from D-erythrose 4-phosphate and phosphoenolpyruvate: step 2/7. In terms of biological role, catalyzes the conversion of 3-deoxy-D-arabino-heptulosonate 7-phosphate (DAHP) to dehydroquinate (DHQ). The chain is 3-dehydroquinate synthase from Chlamydia trachomatis serovar L2 (strain ATCC VR-902B / DSM 19102 / 434/Bu).